A 365-amino-acid chain; its full sequence is Probable dual-specificity RNA methyltransferase RlmN (365 aa).

The Proton acceptor role is filled by Glu-99. A Radical SAM core domain is found at 105–344 (QSYGLSVCVT…CVVRQEHGTD (240 aa)). Cysteines 112 and 349 form a disulfide. Positions 119, 123, and 126 each coordinate [4Fe-4S] cluster. S-adenosyl-L-methionine is bound by residues 171-172 (GE), Ser-203, 227-229 (SLH), and Asn-305. The active-site S-methylcysteine intermediate is Cys-349.

Belongs to the radical SAM superfamily. RlmN family. [4Fe-4S] cluster is required as a cofactor.

Its subcellular location is the cytoplasm. It catalyses the reaction adenosine(2503) in 23S rRNA + 2 reduced [2Fe-2S]-[ferredoxin] + 2 S-adenosyl-L-methionine = 2-methyladenosine(2503) in 23S rRNA + 5'-deoxyadenosine + L-methionine + 2 oxidized [2Fe-2S]-[ferredoxin] + S-adenosyl-L-homocysteine. The catalysed reaction is adenosine(37) in tRNA + 2 reduced [2Fe-2S]-[ferredoxin] + 2 S-adenosyl-L-methionine = 2-methyladenosine(37) in tRNA + 5'-deoxyadenosine + L-methionine + 2 oxidized [2Fe-2S]-[ferredoxin] + S-adenosyl-L-homocysteine. Specifically methylates position 2 of adenine 2503 in 23S rRNA and position 2 of adenine 37 in tRNAs. The chain is Probable dual-specificity RNA methyltransferase RlmN from Lactococcus lactis subsp. cremoris (strain MG1363).